We begin with the raw amino-acid sequence, 492 residues long: NADH-quinone oxidoreductase subunit N (492 aa).

The next 14 helical transmembrane spans lie at 18–38 (ILPM…NAFT), 45–65 (LNMF…LGLE), 80–100 (LSLV…FLAL), 108–128 (FQTA…QFMV), 133–153 (LLLM…LMAL), 167–187 (FTMG…FYLL), 209–229 (MLFA…VSLV), 250–270 (ISIV…GAFI), 277–297 (VEDI…LIAL), 305–325 (MLAY…FIHT), 333–353 (FVYW…LWLL), 381–401 (VAIL…FSVF), 415–435 (NHIL…FYYF), and 464–484 (MPIY…VFMM).

Belongs to the complex I subunit 2 family. NDH-1 is composed of 14 different subunits. Subunits NuoA, H, J, K, L, M, N constitute the membrane sector of the complex.

It localises to the cell inner membrane. It catalyses the reaction a quinone + NADH + 5 H(+)(in) = a quinol + NAD(+) + 4 H(+)(out). Functionally, NDH-1 shuttles electrons from NADH, via FMN and iron-sulfur (Fe-S) centers, to quinones in the respiratory chain. The immediate electron acceptor for the enzyme in this species is believed to be ubiquinone. Couples the redox reaction to proton translocation (for every two electrons transferred, four hydrogen ions are translocated across the cytoplasmic membrane), and thus conserves the redox energy in a proton gradient. This chain is NADH-quinone oxidoreductase subunit N, found in Helicobacter acinonychis (strain Sheeba).